The sequence spans 637 residues: E3 ubiquitin-protein ligase CHFR (637 aa).

The FHA domain maps to C31 to V82. Disordered stretches follow at residues E120–L172 and S193–T267. Over residues G130 to S142 the composition is skewed to acidic residues. Residues S193–Q210 are compositionally biased toward polar residues. Positions S258–T267 are enriched in basic and acidic residues. The RING-type zinc finger occupies C277–R316. The segment at K428 to E447 is disordered. Over residues T429 to P445 the composition is skewed to low complexity. Residues P606–H628 form a PBZ-type zinc finger.

It belongs to the CHFR family.

It is found in the nucleus. Its subcellular location is the PML body. The enzyme catalyses S-ubiquitinyl-[E2 ubiquitin-conjugating enzyme]-L-cysteine + [acceptor protein]-L-lysine = [E2 ubiquitin-conjugating enzyme]-L-cysteine + N(6)-ubiquitinyl-[acceptor protein]-L-lysine.. It functions in the pathway protein modification; protein ubiquitination. Its function is as follows. E3 ubiquitin-protein ligase that functions in the antephase checkpoint by actively delaying passage into mitosis in response to microtubule poisons. Acts in early prophase before chromosome condensation, when the centrosome move apart from each other along the periphery of the nucleus. Probably involved in signaling the presence of mitotic stress caused by microtubule poisons by mediating the 'Lys-48'-linked ubiquitination of target proteins, leading to their degradation by the proteasome. May also promote the formation of 'Lys-63'-linked polyubiquitin chains and functions with the specific ubiquitin-conjugating ubc13-mms2 (ube2n-ube2v2) heterodimer. Substrates that are polyubiquitinated at 'Lys-63' are usually not targeted for degradation, but are rather involved in signaling cellular stress. This chain is E3 ubiquitin-protein ligase CHFR (chfr), found in Danio rerio (Zebrafish).